Consider the following 936-residue polypeptide: Protein translocase subunit SecA (936 aa).

ATP is bound by residues Gln-87, 105 to 109 (GEGKT), and Asp-515. 4 residues coordinate Zn(2+): Cys-920, Cys-922, Cys-931, and His-932.

Belongs to the SecA family. In terms of assembly, monomer and homodimer. Part of the essential Sec protein translocation apparatus which comprises SecA, SecYEG and auxiliary proteins SecDF-YajC and YidC. Requires Zn(2+) as cofactor.

The protein resides in the cell inner membrane. The protein localises to the cytoplasm. The catalysed reaction is ATP + H2O + cellular proteinSide 1 = ADP + phosphate + cellular proteinSide 2.. Part of the Sec protein translocase complex. Interacts with the SecYEG preprotein conducting channel. Has a central role in coupling the hydrolysis of ATP to the transfer of proteins into and across the cell membrane, serving both as a receptor for the preprotein-SecB complex and as an ATP-driven molecular motor driving the stepwise translocation of polypeptide chains across the membrane. The protein is Protein translocase subunit SecA of Paraburkholderia phymatum (strain DSM 17167 / CIP 108236 / LMG 21445 / STM815) (Burkholderia phymatum).